A 191-amino-acid polypeptide reads, in one-letter code: Thymidine kinase (191 aa).

ATP is bound by residues 15–22 (GPMYSGKT) and 88–91 (DEAQ). Glu-89 acts as the Proton acceptor in catalysis. 4 residues coordinate Zn(2+): Cys-145, Cys-148, Cys-183, and Cys-186.

This sequence belongs to the thymidine kinase family. As to quaternary structure, homotetramer.

Its subcellular location is the cytoplasm. It carries out the reaction thymidine + ATP = dTMP + ADP + H(+). This Clostridium botulinum (strain Kyoto / Type A2) protein is Thymidine kinase.